A 688-amino-acid chain; its full sequence is Methionine--tRNA ligase (688 aa).

The 'HIGH' region motif lies at Pro-13 to His-23. Zn(2+) contacts are provided by Cys-144, Cys-147, Cys-157, and Cys-160. Positions Lys-334–Ser-338 match the 'KMSKS' region motif. Lys-337 serves as a coordination point for ATP. Residues Asp-582 to Arg-688 enclose the tRNA-binding domain.

It belongs to the class-I aminoacyl-tRNA synthetase family. MetG type 1 subfamily. As to quaternary structure, homodimer. Requires Zn(2+) as cofactor.

It localises to the cytoplasm. The enzyme catalyses tRNA(Met) + L-methionine + ATP = L-methionyl-tRNA(Met) + AMP + diphosphate. In terms of biological role, is required not only for elongation of protein synthesis but also for the initiation of all mRNA translation through initiator tRNA(fMet) aminoacylation. The protein is Methionine--tRNA ligase of Ralstonia nicotianae (strain ATCC BAA-1114 / GMI1000) (Ralstonia solanacearum).